The following is a 517-amino-acid chain: Aldehyde dehydrogenase, mitochondrial (517 aa).

A mitochondrion-targeting transit peptide spans 1–17; the sequence is MLRAAARFGPRLGRRLL. The SIFI-degron signature appears at 9 to 24; it reads GPRLGRRLLSAAATQA. N6-acetyllysine is present on residues K52, K73, K78, and K159. 262-267 serves as a coordination point for NAD(+); that stretch reads GSTEIG. The active-site Proton acceptor is E285. C319 (nucleophile) is an active-site residue. N6-acetyllysine occurs at positions 368, 383, 426, 428, and 451.

This sequence belongs to the aldehyde dehydrogenase family. As to quaternary structure, homotetramer. Post-translationally, in response to mitochondrial stress, the precursor protein is ubiquitinated by the SIFI complex in the cytoplasm before mitochondrial import, leading to its degradation. Within the SIFI complex, UBR4 initiates ubiquitin chain that are further elongated or branched by KCMF1.

It localises to the mitochondrion matrix. It carries out the reaction an aldehyde + NAD(+) + H2O = a carboxylate + NADH + 2 H(+). It functions in the pathway alcohol metabolism; ethanol degradation; acetate from ethanol: step 2/2. Functionally, required for clearance of cellular formaldehyde, a cytotoxic and carcinogenic metabolite that induces DNA damage. This Homo sapiens (Human) protein is Aldehyde dehydrogenase, mitochondrial (ALDH2).